Here is a 328-residue protein sequence, read N- to C-terminus: L-lactate dehydrogenase (328 aa).

NAD(+) is bound by residues Val18, Glu39, Lys46, Tyr71, and 85 to 86 (GA). Substrate-binding residues include Gln88 and Arg94. NAD(+)-binding positions include Ser107, 124 to 126 (AAN), and Ser149. Substrate is bound at residue 126 to 129 (NPVD). 154 to 157 (DSAR) contributes to the substrate binding site. Beta-D-fructose 1,6-bisphosphate contacts are provided by Arg159 and His174. Catalysis depends on His181, which acts as the Proton acceptor. Tyr226 is modified (phosphotyrosine). Thr235 contacts substrate.

Belongs to the LDH/MDH superfamily. LDH family. In terms of assembly, homotetramer.

The protein resides in the cytoplasm. It carries out the reaction (S)-lactate + NAD(+) = pyruvate + NADH + H(+). Its pathway is fermentation; pyruvate fermentation to lactate; (S)-lactate from pyruvate: step 1/1. Its activity is regulated as follows. Allosterically activated by fructose 1,6-bisphosphate (FBP). Catalyzes the conversion of lactate to pyruvate. The polypeptide is L-lactate dehydrogenase (Streptococcus pneumoniae (strain 70585)).